The chain runs to 544 residues: Chaperonin GroEL 1 (544 aa).

ATP is bound by residues 29–32 (TLGP), 86–90 (DGTTT), G413, 479–481 (NAA), and D495.

This sequence belongs to the chaperonin (HSP60) family. As to quaternary structure, forms a cylinder of 14 subunits composed of two heptameric rings stacked back-to-back. Interacts with the co-chaperonin GroES.

The protein localises to the cytoplasm. It catalyses the reaction ATP + H2O + a folded polypeptide = ADP + phosphate + an unfolded polypeptide.. Its function is as follows. Together with its co-chaperonin GroES, plays an essential role in assisting protein folding. The GroEL-GroES system forms a nano-cage that allows encapsulation of the non-native substrate proteins and provides a physical environment optimized to promote and accelerate protein folding. In Synechococcus sp. (strain CC9902), this protein is Chaperonin GroEL 1.